We begin with the raw amino-acid sequence, 917 residues long: Protein translocase subunit SecA (917 aa).

ATP-binding positions include glutamine 87, 105 to 109, and aspartate 513; that span reads GEGKT. The interval 834-917 is disordered; that stretch reads EEQMNEMEKR…YKSCHGKLTG (84 aa). Over residues 839–852 the composition is skewed to basic and acidic residues; sequence EMEKRRQEEAERQR. Positions 862–876 are enriched in low complexity; sequence APSQLAAPATPATPE. Zn(2+)-binding residues include cysteine 900, cysteine 902, cysteine 911, and histidine 912.

Belongs to the SecA family. Monomer and homodimer. Part of the essential Sec protein translocation apparatus which comprises SecA, SecYEG and auxiliary proteins SecDF-YajC and YidC. The cofactor is Zn(2+).

It is found in the cell inner membrane. Its subcellular location is the cytoplasm. It catalyses the reaction ATP + H2O + cellular proteinSide 1 = ADP + phosphate + cellular proteinSide 2.. Functionally, part of the Sec protein translocase complex. Interacts with the SecYEG preprotein conducting channel. Has a central role in coupling the hydrolysis of ATP to the transfer of proteins into and across the cell membrane, serving both as a receptor for the preprotein-SecB complex and as an ATP-driven molecular motor driving the stepwise translocation of polypeptide chains across the membrane. This chain is Protein translocase subunit SecA, found in Saccharophagus degradans (strain 2-40 / ATCC 43961 / DSM 17024).